Here is a 318-residue protein sequence, read N- to C-terminus: uncharacterized protein (318 aa).

The protein belongs to the NAD(P)-dependent epimerase/dehydratase family.

This is an uncharacterized protein from Staphylococcus epidermidis (strain ATCC 12228 / FDA PCI 1200).